A 193-amino-acid polypeptide reads, in one-letter code: MGPWWALWLILTLPQILGGQSPTMPQGFSQMTSFQSNKFQGEWFVLGLADNTYKREHRPLLHSFITLFKLRDNSEFQVTNSMTRGKHCSTWSYTLIPTNKPGQFTRDNRGSGPGADKENIQVIETDYVKFALVLSLRQASNQNITRVSLLGRDWKITHKTIDRFICLTKTQNLTKNNLLFPDLTDWLLDPKVC.

The signal sequence occupies residues 1-19 (MGPWWALWLILTLPQILGG). A disulfide bond links Cys88 and Cys193. N-linked (GlcNAc...) asparagine glycans are attached at residues Asn143 and Asn172.

Belongs to the calycin superfamily. Lipocalin family. Monomer.

The protein localises to the secreted. In terms of biological role, binds all-trans retinoic acid and may act as a retinoid carrier protein within the epididymis. May play a role in male fertility. This is Epididymal-specific lipocalin-12 (Lcn12) from Rattus norvegicus (Rat).